Consider the following 363-residue polypeptide: Histidinol-phosphate aminotransferase (363 aa).

K220 carries the post-translational modification N6-(pyridoxal phosphate)lysine.

The protein belongs to the class-II pyridoxal-phosphate-dependent aminotransferase family. Histidinol-phosphate aminotransferase subfamily. As to quaternary structure, homodimer. The cofactor is pyridoxal 5'-phosphate.

It catalyses the reaction L-histidinol phosphate + 2-oxoglutarate = 3-(imidazol-4-yl)-2-oxopropyl phosphate + L-glutamate. It functions in the pathway amino-acid biosynthesis; L-histidine biosynthesis; L-histidine from 5-phospho-alpha-D-ribose 1-diphosphate: step 7/9. This chain is Histidinol-phosphate aminotransferase, found in Chlorobium chlorochromatii (strain CaD3).